Here is a 623-residue protein sequence, read N- to C-terminus: Ciliated left-right organizer metallopeptidase (623 aa).

The first 20 residues, 1 to 20 (MSFLLCIGILLLPWFPCVCG), serve as a signal peptide directing secretion. Residues 21–578 (KCIFDQIQRS…LFLVSEAKIS (558 aa)) are Extracellular-facing. Position 249 (histidine 249) interacts with Zn(2+). Glutamate 250 is an active-site residue. Histidine 253 and histidine 326 together coordinate Zn(2+). The helical transmembrane segment at 579–599 (LAAVLSLMAVFALLSAAVLLY) threads the bilayer. The Cytoplasmic segment spans residues 600–623 (RKNLSVRVHAASYRTPLPHILYRN).

The protein belongs to the peptidase M8 family. Requires Zn(2+) as cofactor. In terms of tissue distribution, expressed specifically in dorsal forerunner cells (DFCs) that form a ciliated Kupffer's vesicle later.

Its subcellular location is the membrane. Plays an essential role for patterning the left-right axis. Requires solely on the left side, downstream of the leftward flow, but upstream of dand5, a nodal inhibitor involved in left-right patterning. This Danio rerio (Zebrafish) protein is Ciliated left-right organizer metallopeptidase (cirop).